A 337-amino-acid polypeptide reads, in one-letter code: Tryptophan--tRNA ligase (337 aa).

Residues 11-13 and 19-20 contribute to the ATP site; these read QPT and GN. Positions 12–20 match the 'HIGH' region motif; it reads PTGALHLGN. Asp135 contributes to the L-tryptophan binding site. Residues 147–149, Val191, and 200–204 each bind ATP; these read GED and KMSKS. Residues 200 to 204 carry the 'KMSKS' region motif; sequence KMSKS.

This sequence belongs to the class-I aminoacyl-tRNA synthetase family. Homodimer.

Its subcellular location is the cytoplasm. It carries out the reaction tRNA(Trp) + L-tryptophan + ATP = L-tryptophyl-tRNA(Trp) + AMP + diphosphate + H(+). Its function is as follows. Catalyzes the attachment of tryptophan to tRNA(Trp). The chain is Tryptophan--tRNA ligase from Prochlorococcus marinus (strain MIT 9313).